The sequence spans 327 residues: Phenylalanine--tRNA ligase alpha subunit (327 aa).

Residue E252 participates in Mg(2+) binding.

This sequence belongs to the class-II aminoacyl-tRNA synthetase family. Phe-tRNA synthetase alpha subunit type 1 subfamily. Tetramer of two alpha and two beta subunits. The cofactor is Mg(2+).

The protein resides in the cytoplasm. The enzyme catalyses tRNA(Phe) + L-phenylalanine + ATP = L-phenylalanyl-tRNA(Phe) + AMP + diphosphate + H(+). The polypeptide is Phenylalanine--tRNA ligase alpha subunit (Shigella flexneri).